The primary structure comprises 210 residues: Orotate phosphoribosyltransferase (210 aa).

5-phospho-alpha-D-ribose 1-diphosphate contacts are provided by residues R94, K98, H100, and 120-128 (EDLISTGGS). Residue S124 participates in orotate binding.

Belongs to the purine/pyrimidine phosphoribosyltransferase family. PyrE subfamily. Homodimer. It depends on Mg(2+) as a cofactor.

The catalysed reaction is orotidine 5'-phosphate + diphosphate = orotate + 5-phospho-alpha-D-ribose 1-diphosphate. It participates in pyrimidine metabolism; UMP biosynthesis via de novo pathway; UMP from orotate: step 1/2. Catalyzes the transfer of a ribosyl phosphate group from 5-phosphoribose 1-diphosphate to orotate, leading to the formation of orotidine monophosphate (OMP). The protein is Orotate phosphoribosyltransferase of Bacillus anthracis (strain A0248).